A 212-amino-acid chain; its full sequence is Protein FAM177A1 (212 aa).

Position 1 is an N-acetylmethionine (methionine 1). Basic and acidic residues predominate over residues 1–11; that stretch reads MEGEPASREEG. A disordered region spans residues 1 to 33; that stretch reads MEGEPASREEGEAVNASGAAAASAFRESAQQMS. Over residues 13–29 the composition is skewed to low complexity; it reads AVNASGAAAASAFRESA. Serine 69 is subject to Phosphoserine. Threonine 70 bears the Phosphothreonine mark. A coiled-coil region spans residues 135–172; sequence IDEYYRMKKEEEEEEEENRMSEEAERQYQQNKLQADSV. A disordered region spans residues 146 to 179; that stretch reads EEEEEENRMSEEAERQYQQNKLQADSVVQSDQPE. The segment covering 161–179 has biased composition (polar residues); sequence QYQQNKLQADSVVQSDQPE.

Belongs to the FAM177 family.

This is Protein FAM177A1 (FAM177A1) from Bos taurus (Bovine).